Here is a 108-residue protein sequence, read N- to C-terminus: MTGTGKTVTRVDLCEAVYQKVGLSRTESSAFVELVLKEITDCLEKGETVKLSSFGSFMVRKKGQRIGRNPKTGTEVPISPRRVMVFKPSAILKQRINANGAAAPTKTD.

The protein belongs to the bacterial histone-like protein family. As to quaternary structure, heterodimer of an alpha and a beta chain.

Functionally, this protein is one of the two subunits of integration host factor, a specific DNA-binding protein that functions in genetic recombination as well as in transcriptional and translational control. This chain is Integration host factor subunit alpha, found in Rhodopseudomonas palustris (strain BisB18).